The following is a 455-amino-acid chain: Adhesin YadA (455 aa).

An N-terminal signal peptide occupies residues 1–25 (MTKDFKISVSAALISALFSSPYAFA). The interval 26–363 (DDYDGIPNLT…KKAIRESNQY (338 aa)) is surface exposed passenger domain. Positions 209–243 (VNVAQLKKEIEKTQENTNKRSAELLANANAYADNK) form a coiled coil. The tract at residues 364–402 (TDHKFRQLDNRLDKLDTRVDKGLASSAALNSLFQPYGVG) is outer membrane translocation of the passenger domain. Transmembrane regions (beta stranded) follow at residues 402–412 (GKVNFTAGVGG), 416–427 (SQALAIGSGYRV), 434–440 (KAGVAYA), and 444–455 (DVMYNASFNIEW). A translocator domain region spans residues 403-455 (KVNFTAGVGGYRSSQALAIGSGYRVNENVALKAGVAYAGSSDVMYNASFNIEW).

Belongs to the autotransporter-2 (AT-2) (TC 1.B.40) family. In terms of assembly, homotrimer; in gels migrates as monomers, dimers and homotrimers. Does not form trimers with distantly related EibA from E.coli; coexpression was lethal and one of the genes is eliminated in vivo. If the full translocator domain (368-455) is exchanged with that of EibA ('299-392'), will form heterotrimers with EibA and vice-versa.

Its subcellular location is the cell surface. The protein resides in the cell outer membrane. Collagen-binding outer membrane protein forming a fibrillar matrix on the bacterial cell surface. Promotes initial attachment and invasion of eukaryotic cells. Also protects the bacteria by being responsible for agglutination, serum resistance, complement inactivation and phagocytosis resistance. In Yersinia enterocolitica, this protein is Adhesin YadA (yadA).